The sequence spans 547 residues: Pyochelin synthase PchD (547 aa).

It belongs to the ATP-dependent AMP-binding enzyme family.

The catalysed reaction is salicylate + holo-[ACP] + ATP = salicyl-[ACP] + AMP + diphosphate. Its pathway is siderophore biosynthesis. It functions in the pathway antifungal biosynthesis. Involved in the biosynthesis of the siderophore pyochelin. Specifically adenylates salicylate and loads it onto the holo form of PchE via a thioester linkage to the phosphopanthetheine moiety. Is also involved in the synthesis of the antifungal antibiotic dihydroaeruginoic acid (Dha or hydroxyphenyl-thiazolinyl-carboxylate), a precursor of pyochelin. In Pseudomonas aeruginosa (strain UCBPP-PA14), this protein is Pyochelin synthase PchD.